The chain runs to 915 residues: Bifunctional uridylyltransferase/uridylyl-removing enzyme (915 aa).

The interval Met-1–Pro-360 is uridylyltransferase. The uridylyl-removing stretch occupies residues Ile-361–Val-731. The HD domain maps to Val-478–Val-594. 2 ACT domains span residues Gln-732–Arg-817 and Ile-840–Ile-915.

It belongs to the GlnD family. Requires Mg(2+) as cofactor.

It catalyses the reaction [protein-PII]-L-tyrosine + UTP = [protein-PII]-uridylyl-L-tyrosine + diphosphate. It carries out the reaction [protein-PII]-uridylyl-L-tyrosine + H2O = [protein-PII]-L-tyrosine + UMP + H(+). Its activity is regulated as follows. Uridylyltransferase (UTase) activity is inhibited by glutamine, while glutamine activates uridylyl-removing (UR) activity. Modifies, by uridylylation and deuridylylation, the PII regulatory proteins (GlnB and homologs), in response to the nitrogen status of the cell that GlnD senses through the glutamine level. Under low glutamine levels, catalyzes the conversion of the PII proteins and UTP to PII-UMP and PPi, while under higher glutamine levels, GlnD hydrolyzes PII-UMP to PII and UMP (deuridylylation). Thus, controls uridylylation state and activity of the PII proteins, and plays an important role in the regulation of nitrogen assimilation and metabolism. The sequence is that of Bifunctional uridylyltransferase/uridylyl-removing enzyme from Psychrobacter arcticus (strain DSM 17307 / VKM B-2377 / 273-4).